Reading from the N-terminus, the 414-residue chain is Serine/threonine transporter SstT (414 aa).

The next 8 helical transmembrane spans lie at 16 to 36, 46 to 66, 84 to 104, 143 to 163, 180 to 200, 219 to 239, 300 to 320, and 332 to 352; these read GSLV…AWIS, LGTL…LMLV, ILFL…VFSF, ALLN…GFAL, AVTF…FGLV, LVVL…LLVF, MAGA…TLGV, and VVAS…LLLI.

Belongs to the dicarboxylate/amino acid:cation symporter (DAACS) (TC 2.A.23) family.

It is found in the cell inner membrane. The catalysed reaction is L-serine(in) + Na(+)(in) = L-serine(out) + Na(+)(out). It catalyses the reaction L-threonine(in) + Na(+)(in) = L-threonine(out) + Na(+)(out). Involved in the import of serine and threonine into the cell, with the concomitant import of sodium (symport system). The sequence is that of Serine/threonine transporter SstT from Salmonella newport (strain SL254).